The primary structure comprises 37 residues: Large ribosomal subunit protein bL36 (37 aa).

This sequence belongs to the bacterial ribosomal protein bL36 family.

The sequence is that of Large ribosomal subunit protein bL36 from Polaromonas naphthalenivorans (strain CJ2).